Here is a 322-residue protein sequence, read N- to C-terminus: Serine/threonine-protein phosphatase PP1 isozyme 6 (322 aa).

Met1 carries the post-translational modification N-acetylmethionine. Residues Asp61, His63, Asp89, and Asn121 each coordinate Mn(2+). His122 serves as the catalytic Proton donor. Mn(2+) is bound by residues His170 and His245. The segment at 303–322 (GFNNNVPRPGTPPHKGGKGR) is disordered.

This sequence belongs to the PPP phosphatase family. PP-1 subfamily. The cofactor is Mn(2+). In terms of tissue distribution, strongly up-regulated within developing flowers, especially in the tapetum, the developing and mature pollen and in the ovaries.

Its subcellular location is the nucleus. The protein localises to the cytoplasm. It catalyses the reaction O-phospho-L-seryl-[protein] + H2O = L-seryl-[protein] + phosphate. The catalysed reaction is O-phospho-L-threonyl-[protein] + H2O = L-threonyl-[protein] + phosphate. Phosphatase activity is strongly reduced by the protein phosphatase inhibitor 2 (I-2). Its function is as follows. Serine/threonine-protein phosphatase that possesses phosphatase activity toward para-nitrophenyl phosphate (pNPP) in vitro. This chain is Serine/threonine-protein phosphatase PP1 isozyme 6, found in Arabidopsis thaliana (Mouse-ear cress).